The sequence spans 235 residues: Small ribosomal subunit protein uS3 (235 aa).

One can recognise a KH type-2 domain in the interval 39-107 (VRSYVKKKLI…PAQVNISEIR (69 aa)).

It belongs to the universal ribosomal protein uS3 family. Part of the 30S ribosomal subunit. Forms a tight complex with proteins S10 and S14.

Its function is as follows. Binds the lower part of the 30S subunit head. Binds mRNA in the 70S ribosome, positioning it for translation. This is Small ribosomal subunit protein uS3 from Buchnera aphidicola subsp. Cinara cedri (strain Cc).